Reading from the N-terminus, the 301-residue chain is Protoheme IX farnesyltransferase (301 aa).

8 consecutive transmembrane segments (helical) span residues 30 to 50 (VISLLDLAAIAGFVLGLPKAI), 55 to 75 (IIVSFLAVIIGGSLASGGGMI), 106 to 126 (AYAIGSIFIVVGTLIGFLANP), 127 to 147 (LTALFIALGAFIYVVIYSIWL), 152 to 172 (WWNIVIGGFAGSAAAWAGFAA), 177 to 197 (FTLLSFLLGFLIFMWTPGHFW), 233 to 253 (ALMVPFALLIGLYAGLIYLIV), and 281 to 301 (FKLSSPYLAIILLTLIIVKLI).

This sequence belongs to the UbiA prenyltransferase family. Protoheme IX farnesyltransferase subfamily.

It localises to the cell membrane. The enzyme catalyses heme b + (2E,6E)-farnesyl diphosphate + H2O = Fe(II)-heme o + diphosphate. It functions in the pathway porphyrin-containing compound metabolism; heme O biosynthesis; heme O from protoheme: step 1/1. Converts heme B (protoheme IX) to heme O by substitution of the vinyl group on carbon 2 of heme B porphyrin ring with a hydroxyethyl farnesyl side group. In Sulfurisphaera tokodaii (strain DSM 16993 / JCM 10545 / NBRC 100140 / 7) (Sulfolobus tokodaii), this protein is Protoheme IX farnesyltransferase.